We begin with the raw amino-acid sequence, 474 residues long: tRNA-2-methylthio-N(6)-dimethylallyladenosine synthase (474 aa).

The 118-residue stretch at 3 to 120 (KKLHIKTWGC…LPEMIEQIQQ (118 aa)) folds into the MTTase N-terminal domain. Residues Cys-12, Cys-49, Cys-83, Cys-157, Cys-161, and Cys-164 each coordinate [4Fe-4S] cluster. One can recognise a Radical SAM core domain in the interval 143-375 (RAEGPSAFVS…QDRITQQAMR (233 aa)). A TRAM domain is found at 378–441 (RQMLGTVQRI…TNSLRGKFIR (64 aa)).

Belongs to the methylthiotransferase family. MiaB subfamily. As to quaternary structure, monomer. [4Fe-4S] cluster serves as cofactor.

Its subcellular location is the cytoplasm. The catalysed reaction is N(6)-dimethylallyladenosine(37) in tRNA + (sulfur carrier)-SH + AH2 + 2 S-adenosyl-L-methionine = 2-methylsulfanyl-N(6)-dimethylallyladenosine(37) in tRNA + (sulfur carrier)-H + 5'-deoxyadenosine + L-methionine + A + S-adenosyl-L-homocysteine + 2 H(+). Functionally, catalyzes the methylthiolation of N6-(dimethylallyl)adenosine (i(6)A), leading to the formation of 2-methylthio-N6-(dimethylallyl)adenosine (ms(2)i(6)A) at position 37 in tRNAs that read codons beginning with uridine. This Shewanella loihica (strain ATCC BAA-1088 / PV-4) protein is tRNA-2-methylthio-N(6)-dimethylallyladenosine synthase.